The primary structure comprises 655 residues: Protein movement modulator (655 aa).

Residues 1–54 (MEQPSILVKILHSIPHVNYTFRRVNDTFNPDSDVYLEPTNNKLQCQQKGIELQS) are Extracellular-facing. N-linked (GlcNAc...) asparagine glycosylation is found at Asn18 and Asn25. A helical transmembrane segment spans residues 55 to 75 (LVILASIPAGLLIGSLLGLLL). The Cytoplasmic segment spans residues 76–95 (YLLTRCCDRRQRKPSAQRCQ). A helical transmembrane segment spans residues 96 to 116 (SCSLVIITLMTCAAIGLGLYG). At 117–231 (NDDFHNGLLQ…GEFYESIRWP (115 aa)) the chain is on the extracellular side. N-linked (GlcNAc...) asparagine glycosylation is found at Asn171, Asn188, and Asn211. Residues 232 to 252 (ATLAFLTVLLLLCTVLVIGVA) form a helical membrane-spanning segment. The Cytoplasmic segment spans residues 253-258 (RRSRCT). The chain crosses the membrane as a helical span at residues 259–279 (LIFFSVSGLFCIIICWLLAGV). Topologically, residues 280–401 (YLASSVAAGD…ALRGLCGGGL (122 aa)) are extracellular. N-linked (GlcNAc...) asparagine glycosylation is found at Asn326 and Asn372. A helical transmembrane segment spans residues 402-422 (LGLSLMMVAGLLTSFLLTILV). The Cytoplasmic portion of the chain corresponds to 423–655 (YADSHAWIYL…CKTLESNDFY (233 aa)). The segment at 446 to 576 (APLFPASNAP…NNHYNNTQHR (131 aa)) is disordered. The span at 450–464 (PASNAPSASISPTAP) shows a compositional bias: low complexity. The segment covering 465-480 (LSTGTINRTLLHHQQA) has biased composition (polar residues). Residues 482-509 (SGGGSGTLPGSGGGAGAGGGVGANGHNG) show a composition bias toward gly residues. Composition is skewed to low complexity over residues 526–539 (SPSSQSSHTSSTAT) and 546–576 (SYHNSHQQHNNHLYSNHYSHSNNHYNNTQHR). Phosphoserine occurs at positions 597 and 599.

The protein belongs to the tweety family.

The protein resides in the cell membrane. It catalyses the reaction chloride(in) = chloride(out). Its function is as follows. Probable large-conductance Ca(2+)-activated chloride channel. Modulator of embryonic movement. In Drosophila melanogaster (Fruit fly), this protein is Protein movement modulator.